The sequence spans 138 residues: uncharacterized protein (138 aa).

The protein to phage 186 CP81.

This is an uncharacterized protein from Salmonella typhimurium (strain LT2 / SGSC1412 / ATCC 700720).